Reading from the N-terminus, the 171-residue chain is Shikimate kinase (171 aa).

Residue 14-19 coordinates ATP; sequence GAGKST. Serine 18 serves as a coordination point for Mg(2+). Substrate-binding residues include aspartate 36, arginine 60, and glycine 82. Arginine 120 serves as a coordination point for ATP. Arginine 139 lines the substrate pocket. Glutamine 156 contacts ATP.

This sequence belongs to the shikimate kinase family. Monomer. Requires Mg(2+) as cofactor.

Its subcellular location is the cytoplasm. It carries out the reaction shikimate + ATP = 3-phosphoshikimate + ADP + H(+). It participates in metabolic intermediate biosynthesis; chorismate biosynthesis; chorismate from D-erythrose 4-phosphate and phosphoenolpyruvate: step 5/7. In terms of biological role, catalyzes the specific phosphorylation of the 3-hydroxyl group of shikimic acid using ATP as a cosubstrate. The sequence is that of Shikimate kinase from Alteromonas mediterranea (strain DSM 17117 / CIP 110805 / LMG 28347 / Deep ecotype).